A 350-amino-acid chain; its full sequence is Heme A synthase (350 aa).

The next 8 helical transmembrane spans lie at 14–34, 95–115, 125–145, 162–182, 202–222, 260–280, 296–316, and 317–337; these read VAIW…IGGF, YVHR…FIYF, VVIK…AGWY, LALH…QFFD, VGII…VAGL, VQFI…ILTV, IIQI…AIAI, and AHQV…CYLR. Residue His264 coordinates heme. His318 is a binding site for heme.

It belongs to the COX15/CtaA family. Type 2 subfamily. In terms of assembly, interacts with CtaB. The cofactor is heme b.

It localises to the cell membrane. It carries out the reaction Fe(II)-heme o + 2 A + H2O = Fe(II)-heme a + 2 AH2. Its pathway is porphyrin-containing compound metabolism; heme A biosynthesis; heme A from heme O: step 1/1. In terms of biological role, catalyzes the conversion of heme O to heme A by two successive hydroxylations of the methyl group at C8. The first hydroxylation forms heme I, the second hydroxylation results in an unstable dihydroxymethyl group, which spontaneously dehydrates, resulting in the formyl group of heme A. In Wolbachia pipientis wMel, this protein is Heme A synthase.